Here is a 257-residue protein sequence, read N- to C-terminus: Imidazole glycerol phosphate synthase subunit HisF (257 aa).

Active-site residues include Asp12 and Asp131.

Belongs to the HisA/HisF family. As to quaternary structure, heterodimer of HisH and HisF.

Its subcellular location is the cytoplasm. It carries out the reaction 5-[(5-phospho-1-deoxy-D-ribulos-1-ylimino)methylamino]-1-(5-phospho-beta-D-ribosyl)imidazole-4-carboxamide + L-glutamine = D-erythro-1-(imidazol-4-yl)glycerol 3-phosphate + 5-amino-1-(5-phospho-beta-D-ribosyl)imidazole-4-carboxamide + L-glutamate + H(+). It functions in the pathway amino-acid biosynthesis; L-histidine biosynthesis; L-histidine from 5-phospho-alpha-D-ribose 1-diphosphate: step 5/9. Functionally, IGPS catalyzes the conversion of PRFAR and glutamine to IGP, AICAR and glutamate. The HisF subunit catalyzes the cyclization activity that produces IGP and AICAR from PRFAR using the ammonia provided by the HisH subunit. The sequence is that of Imidazole glycerol phosphate synthase subunit HisF from Burkholderia vietnamiensis (strain G4 / LMG 22486) (Burkholderia cepacia (strain R1808)).